A 245-amino-acid polypeptide reads, in one-letter code: MDNYQELRVQFAAQAVDRNEIEQWVREFAYQGFDARRVIELLKQYGGADWEKDAKKMIVLALTRGNKPRRMMMKMSKEGKATVEALINKYKLKEGNPSRDELTLSRVAAALAGWTCQALVVLSEWLPVTGTTMDGLSPAYPRHMMHPSFAGMVDPSLPGDYLRAILDAHSLYLLQFSRVINPNLRGRTKEEVAATFTQPMNAAVNSNFISHEKRREFLKAFGLVDSNGKPSAAVMAAAQAYKTAA.

An essential for oligomerization region spans residues 1–71 (MDNYQELRVQ…LTRGNKPRRM (71 aa)). Positions 30, 33, 67, 105, 106, 185, and 195 each coordinate RNA.

It belongs to the phlebovirus nucleocapsid protein family. As to quaternary structure, homodimer. Homohexamer; ring-shaped, necessary to form the nucleocapsid. Homopentamers; opened pentamers in solution. Binds to viral genomic RNA. Interacts with glycoprotein Gn; this interaction allows packaging of nucleocapsids into virions.

The protein localises to the virion. Its subcellular location is the host cytoplasm. It localises to the host nucleus. The protein resides in the host endoplasmic reticulum-Golgi intermediate compartment. It is found in the host Golgi apparatus. Its function is as follows. Encapsidates the genomic RNA, protecting it from nucleases. Displays high affinity for single-stranded nucleic acid. The encapsidated genomic RNA is termed the nucleocapsid (NC). The ribonucleoprotein has a non-helical structure. Serves as template for viral transcription and replication. After replication, the nucleocapsid is recruited to the host Golgi apparatus by glycoprotein Gn for packaging into virus particles. The chain is Nucleoprotein (N) from Aedes (Bovine).